We begin with the raw amino-acid sequence, 775 residues long: WD repeat-containing protein pop1 (775 aa).

In terms of domain architecture, F-box spans 298-345 (KNFLTGFPAEITNLVLTHLDAPSLCAVSQVSHHWYKLVSSNEELWKSL). WD repeat units follow at residues 444–472 (EHEG…RVWD), 484–538 (GHTS…RLWS), 575–603 (GHTD…RVWK), 615–645 (GHVG…RIWN), and 657–687 (GHSN…RVWD).

As to quaternary structure, homodimer and heterodimer with pop2. Binds to cdc18, phosphorylated cig2, cul1, pip1 and skp1.

Its subcellular location is the nucleus. In terms of biological role, involved in maintenance of ploidy through proteasome dependent degradation of CDK inhibitor rum1 and S-phase initiator cdc18. Functions as a recognition factor for rum1 and cdc18, which are subsequently ubiquitinated and targeted to the 26S proteasome for degradation. Together with pop2, required for cig2 instability during G2 and M phase and cig2 degradation in exponentially growing cells. Regulates cell-cycle progression under starvation through the rum1 protein. This chain is WD repeat-containing protein pop1 (pop1), found in Schizosaccharomyces pombe (strain 972 / ATCC 24843) (Fission yeast).